A 224-amino-acid polypeptide reads, in one-letter code: Menaquinol:cytochrome c reductase cytochrome b subunit (224 aa).

Residues 37 to 57 (FSAFVYCFGGLTFFVTVIQVL) form a helical membrane-spanning segment. Heme b is bound at residue Y42. C43 serves as a coordination point for heme c. Residues R91, H94, H108, and R111 each contribute to the heme b site. 3 helical membrane-spanning segments follow: residues 96–116 (WGAS…FFQG), 126–146 (WIVG…GYLL), and 195–215 (IHVF…FIMI). Residues H196 and H211 each coordinate heme b. Residues R216 and I220 each coordinate heme c. S221 serves as a coordination point for heme b.

It belongs to the cytochrome b family. As to quaternary structure, the main subunits of the menaquinol:cytochrome c complex are a Rieske-type iron-sulfur protein (QcrA), a cytochrome b (QcrB) and a cytochrome c (QcrC). It depends on heme b as a cofactor. Heme c is required as a cofactor.

Its subcellular location is the cell membrane. Functionally, component of the menaquinol:cytochrome c reductase complex. The chain is Menaquinol:cytochrome c reductase cytochrome b subunit from Bacillus subtilis (strain 168).